The sequence spans 265 residues: uncharacterized protein (265 aa).

Residues 1-21 form a helical membrane-spanning segment; that stretch reads MAFNNSTIIIIIVIAFAFFLI. 2 N-linked (GlcNAc...) asparagine; by host glycosylation sites follow: Asn74 and Asn142.

It localises to the host membrane. Its subcellular location is the virion. This is an uncharacterized protein from Acanthamoeba polyphaga mimivirus (APMV).